A 55-amino-acid chain; its full sequence is Large ribosomal subunit protein bL33 (55 aa).

Belongs to the bacterial ribosomal protein bL33 family.

The polypeptide is Large ribosomal subunit protein bL33 (Granulibacter bethesdensis (strain ATCC BAA-1260 / CGDNIH1)).